The primary structure comprises 89 residues: MALSVEEKAQIVNEYKQAEGDTGSPEVQVALLSANINKLQDHFKANGKDHHSRRGLIRMVNQRRKLLDYLKGKDVSRYTALIGRLGLRR.

It belongs to the universal ribosomal protein uS15 family. As to quaternary structure, part of the 30S ribosomal subunit. Forms a bridge to the 50S subunit in the 70S ribosome, contacting the 23S rRNA.

One of the primary rRNA binding proteins, it binds directly to 16S rRNA where it helps nucleate assembly of the platform of the 30S subunit by binding and bridging several RNA helices of the 16S rRNA. Functionally, forms an intersubunit bridge (bridge B4) with the 23S rRNA of the 50S subunit in the ribosome. This Pseudomonas aeruginosa (strain LESB58) protein is Small ribosomal subunit protein uS15.